The sequence spans 82 residues: Probable acyl carrier protein IacP (82 aa).

The Carrier domain maps to Met-3–Leu-78. Ser-38 carries the post-translational modification O-(pantetheine 4'-phosphoryl)serine.

In terms of processing, 4'-phosphopantetheine is transferred from CoA to a specific serine of apo-IacP.

The protein resides in the cytoplasm. Its function is as follows. Acyl carrier protein. The polypeptide is Probable acyl carrier protein IacP (iacP) (Salmonella typhimurium (strain SL1344)).